Consider the following 288-residue polypeptide: ATP synthase gamma chain (288 aa).

It belongs to the ATPase gamma chain family. In terms of assembly, F-type ATPases have 2 components, CF(1) - the catalytic core - and CF(0) - the membrane proton channel. CF(1) has five subunits: alpha(3), beta(3), gamma(1), delta(1), epsilon(1). CF(0) has three main subunits: a, b and c.

Its subcellular location is the cell inner membrane. Functionally, produces ATP from ADP in the presence of a proton gradient across the membrane. The gamma chain is believed to be important in regulating ATPase activity and the flow of protons through the CF(0) complex. This is ATP synthase gamma chain from Rickettsia canadensis (strain McKiel).